The chain runs to 1111 residues: RecBCD enzyme subunit RecC (1111 aa).

It belongs to the RecC family. In terms of assembly, heterotrimer of RecB, RecC and RecD. All subunits contribute to DNA-binding.

Functionally, a helicase/nuclease that prepares dsDNA breaks (DSB) for recombinational DNA repair. Binds to DSBs and unwinds DNA via a highly rapid and processive ATP-dependent bidirectional helicase activity. Unwinds dsDNA until it encounters a Chi (crossover hotspot instigator) sequence from the 3' direction. Cuts ssDNA a few nucleotides 3' to the Chi site. The properties and activities of the enzyme are changed at Chi. The Chi-altered holoenzyme produces a long 3'-ssDNA overhang and facilitates RecA-binding to the ssDNA for homologous DNA recombination and repair. Holoenzyme degrades any linearized DNA that is unable to undergo homologous recombination. In the holoenzyme this subunit recognizes the wild-type Chi sequence, and when added to isolated RecB increases its ATP-dependent helicase processivity. The protein is RecBCD enzyme subunit RecC of Buchnera aphidicola subsp. Baizongia pistaciae (strain Bp).